The sequence spans 261 residues: Indole-3-glycerol phosphate synthase (261 aa).

The protein belongs to the TrpC family.

It catalyses the reaction 1-(2-carboxyphenylamino)-1-deoxy-D-ribulose 5-phosphate + H(+) = (1S,2R)-1-C-(indol-3-yl)glycerol 3-phosphate + CO2 + H2O. It functions in the pathway amino-acid biosynthesis; L-tryptophan biosynthesis; L-tryptophan from chorismate: step 4/5. The sequence is that of Indole-3-glycerol phosphate synthase from Burkholderia ambifaria (strain MC40-6).